We begin with the raw amino-acid sequence, 187 residues long: Large ribosomal subunit protein uL5 (187 aa).

Belongs to the universal ribosomal protein uL5 family. Part of the 50S ribosomal subunit; part of the 5S rRNA/L5/L18/L25 subcomplex. Contacts the 5S rRNA and the P site tRNA. Forms a bridge to the 30S subunit in the 70S ribosome.

In terms of biological role, this is one of the proteins that bind and probably mediate the attachment of the 5S RNA into the large ribosomal subunit, where it forms part of the central protuberance. In the 70S ribosome it contacts protein S13 of the 30S subunit (bridge B1b), connecting the 2 subunits; this bridge is implicated in subunit movement. Contacts the P site tRNA; the 5S rRNA and some of its associated proteins might help stabilize positioning of ribosome-bound tRNAs. This chain is Large ribosomal subunit protein uL5, found in Corynebacterium diphtheriae (strain ATCC 700971 / NCTC 13129 / Biotype gravis).